The following is a 313-amino-acid chain: Porphobilinogen deaminase 2 (313 aa).

Residue Cys246 is modified to S-(dipyrrolylmethanemethyl)cysteine.

Belongs to the HMBS family. In terms of assembly, monomer. Dipyrromethane serves as cofactor.

The catalysed reaction is 4 porphobilinogen + H2O = hydroxymethylbilane + 4 NH4(+). It functions in the pathway porphyrin-containing compound metabolism; protoporphyrin-IX biosynthesis; coproporphyrinogen-III from 5-aminolevulinate: step 2/4. Tetrapolymerization of the monopyrrole PBG into the hydroxymethylbilane pre-uroporphyrinogen in several discrete steps. This Streptomyces coelicolor (strain ATCC BAA-471 / A3(2) / M145) protein is Porphobilinogen deaminase 2 (hemC2).